Here is a 434-residue protein sequence, read N- to C-terminus: Enolase (434 aa).

Ala41 is a phosphoenolpyruvate binding site. Residue Gln165 participates in (2R)-2-phosphoglycerate binding. Glu207 (proton donor) is an active-site residue. Residues Asp244, Glu291, and Asp318 each coordinate Mg(2+). Positions 343, 372, 373, and 394 each coordinate phosphoenolpyruvate. The (2R)-2-phosphoglycerate site is built by Lys343, Arg372, Ser373, and Lys394. Lys343 (proton acceptor) is an active-site residue.

Belongs to the enolase family. Homodimer and homooctamer; the homodimer is inactive. Requires Mg(2+) as cofactor.

Its subcellular location is the cytoplasm. The protein resides in the secreted. The protein localises to the cell surface. The enzyme catalyses (2R)-2-phosphoglycerate = phosphoenolpyruvate + H2O. It functions in the pathway carbohydrate degradation; glycolysis; pyruvate from D-glyceraldehyde 3-phosphate: step 4/5. Its function is as follows. Catalyzes the reversible conversion of 2-phosphoglycerate (2-PG) into phosphoenolpyruvate (PEP). It is essential for the degradation of carbohydrates via glycolysis. In terms of biological role, 'Moonlights' as a laminin receptor. Binds laminin when expressed on the bacterial cell surface; this probably induces destruction of the extracellular matrix, favoring invasion and dissemination. This Staphylococcus aureus protein is Enolase.